The chain runs to 186 residues: MMEEIDRFQVPPVNPEMKLLQDPAETSTIENETAPREPESVAINYKPSPLQVKIEKQRELARKGSVKNGTVGSPVNQQPKKNNVMARTRLVVPNKGYSSLDQSPDEKPLVALDTDSDDDFDMSRYSSSGYSSAEQINQDLNIQLLKDGYRLDEIPDDEDLDLIPPKSVNPTCMCCQATSSTACQIQ.

2 disordered regions span residues 1-47 and 59-132; these read MMEE…NYKP and ELAR…GYSS. Polar residues predominate over residues 67 to 81; it reads KNGTVGSPVNQQPKK. The segment covering 123–132 has biased composition (low complexity); the sequence is SRYSSSGYSS.

This sequence belongs to the FAM219 family.

The chain is Protein FAM219A (fam219a) from Danio rerio (Zebrafish).